Reading from the N-terminus, the 557-residue chain is Probable serine/threonine-protein kinase WNK7 (557 aa).

The Protein kinase domain occupies 28–285 (IRYKEVIGKG…AEELLLDSFL (258 aa)). ATP contacts are provided by residues 108–111 (TELF) and Lys-158. Asp-175 serves as the catalytic Proton acceptor. The span at 451–477 (QNQSSKDNHQNGASSQAGESISHSLSS) shows a compositional bias: polar residues. A disordered region spans residues 451 to 517 (QNQSSKDNHQ…EEEEDERLKE (67 aa)). Ser-505 is modified (phosphoserine).

Belongs to the protein kinase superfamily. Ser/Thr protein kinase family. WNK subfamily.

It catalyses the reaction L-seryl-[protein] + ATP = O-phospho-L-seryl-[protein] + ADP + H(+). The enzyme catalyses L-threonyl-[protein] + ATP = O-phospho-L-threonyl-[protein] + ADP + H(+). Its function is as follows. May regulate flowering time by modulating the photoperiod pathway. In Arabidopsis thaliana (Mouse-ear cress), this protein is Probable serine/threonine-protein kinase WNK7 (WNK7).